We begin with the raw amino-acid sequence, 1123 residues long: Leucine--tRNA ligase, cytoplasmic (1123 aa).

The 'HIGH' region motif lies at 84-94 (PYMNGRLHAGH). Positions 757–761 (KMSKS) match the 'KMSKS' region motif. Residue lysine 760 coordinates ATP.

It belongs to the class-I aminoacyl-tRNA synthetase family.

The protein localises to the cytoplasm. It catalyses the reaction tRNA(Leu) + L-leucine + ATP = L-leucyl-tRNA(Leu) + AMP + diphosphate. The sequence is that of Leucine--tRNA ligase, cytoplasmic (leu-6) from Neurospora crassa (strain ATCC 24698 / 74-OR23-1A / CBS 708.71 / DSM 1257 / FGSC 987).